The following is a 95-amino-acid chain: Co-chaperonin GroES (95 aa).

This sequence belongs to the GroES chaperonin family. In terms of assembly, heptamer of 7 subunits arranged in a ring. Interacts with the chaperonin GroEL.

It localises to the cytoplasm. Functionally, together with the chaperonin GroEL, plays an essential role in assisting protein folding. The GroEL-GroES system forms a nano-cage that allows encapsulation of the non-native substrate proteins and provides a physical environment optimized to promote and accelerate protein folding. GroES binds to the apical surface of the GroEL ring, thereby capping the opening of the GroEL channel. This chain is Co-chaperonin GroES, found in Methylocella silvestris (strain DSM 15510 / CIP 108128 / LMG 27833 / NCIMB 13906 / BL2).